Consider the following 379-residue polypeptide: Glutamate 5-kinase (379 aa).

Lys14 lines the ATP pocket. Residues Ser54, Asp141, and Asn153 each coordinate substrate. ATP is bound by residues 173 to 174 and 215 to 221; these read TD and TGGMATK. Positions 280–358 constitute a PUA domain; that stretch reads KGRLLLDIGA…DEIEPLLGYD (79 aa).

The protein belongs to the glutamate 5-kinase family.

The protein resides in the cytoplasm. The catalysed reaction is L-glutamate + ATP = L-glutamyl 5-phosphate + ADP. It functions in the pathway amino-acid biosynthesis; L-proline biosynthesis; L-glutamate 5-semialdehyde from L-glutamate: step 1/2. Catalyzes the transfer of a phosphate group to glutamate to form L-glutamate 5-phosphate. The sequence is that of Glutamate 5-kinase from Shewanella amazonensis (strain ATCC BAA-1098 / SB2B).